Here is a 466-residue protein sequence, read N- to C-terminus: MLSVYEKVNALDKRAIEELFLSEDILMENAAMALERAVLQNASLGAKVIILCGSGDNGGDGYALARRLVGRFKTLVFEMKLAKSPMCQLQQERAKKAGVVIKAYEENALNQNLECDVLIDCVIGSHFKGKLEPFLNFESLSQKARFKIACDIPSGIDSKGRVDKGAFKADLTISMGAIKSCLLSDRAKDYVGELKVGHLGVFNQIYEIPTDTFLLEKSDLKLPLRDRKNAHKGDYGHAHVLLGKHSGAGLLSALSALSFGSGVVSVQALECEITSNNKPLELVFCENFPNLLSAFALGMGLENIPKDFNKWLELAPCVLDAGVFYHKEVLQALEKEVILTPHPKEFLSLLKLVGINISMLELLDNKLEIARDFSQKYPKVVLLLKGANTLIAHQGQVFINILGSVALAKAGSGDVLAGLILSLLSQNYTPLDAAINASSAHALASLEFKNNYALTPLDLIEKIKQL.

The interval 1–207 is NAD(P)H-hydrate epimerase; sequence MLSVYEKVNA…HLGVFNQIYE (207 aa). One can recognise a YjeF N-terminal domain in the interval 8 to 207; it reads VNALDKRAIE…HLGVFNQIYE (200 aa). Positions 56–60 are NADPHX 1; for epimerase activity; it reads DNGGD. K(+)-binding residues include asparagine 57 and aspartate 120. The tract at residues 124-130 is NADPHX 1; for epimerase activity; that stretch reads GSHFKGK. Aspartate 151 serves as a coordination point for (6S)-NADPHX. Serine 154 contributes to the K(+) binding site. Residues 215–466 form the YjeF C-terminal domain; it reads LEKSDLKLPL…LDLIEKIKQL (252 aa). The segment at 215 to 466 is ADP-dependent (S)-NAD(P)H-hydrate dehydratase; the sequence is LEKSDLKLPL…LDLIEKIKQL (252 aa). Residue glycine 300 participates in (6S)-NADPHX binding. An NADPHX 2; for dehydratase activity region spans residues 342-348; sequence HPKEFLS. ADP contacts are provided by residues 385–389 and 404–413; these read KGANT and SVALAKAGSG. Aspartate 414 lines the (6S)-NADPHX pocket.

In the N-terminal section; belongs to the NnrE/AIBP family. This sequence in the C-terminal section; belongs to the NnrD/CARKD family. Requires K(+) as cofactor.

It catalyses the reaction (6S)-NADHX + ADP = AMP + phosphate + NADH + H(+). The enzyme catalyses (6S)-NADPHX + ADP = AMP + phosphate + NADPH + H(+). It carries out the reaction (6R)-NADHX = (6S)-NADHX. The catalysed reaction is (6R)-NADPHX = (6S)-NADPHX. Its function is as follows. Bifunctional enzyme that catalyzes the epimerization of the S- and R-forms of NAD(P)HX and the dehydration of the S-form of NAD(P)HX at the expense of ADP, which is converted to AMP. This allows the repair of both epimers of NAD(P)HX, a damaged form of NAD(P)H that is a result of enzymatic or heat-dependent hydration. This is Bifunctional NAD(P)H-hydrate repair enzyme Nnr (nnr) from Helicobacter pylori (strain ATCC 700392 / 26695) (Campylobacter pylori).